A 167-amino-acid chain; its full sequence is Xanthine-guanine phosphoribosyltransferase (167 aa).

Residues 47 to 48 (RG), Gln79, and 102 to 110 (DDLVDSGKT) each bind 5-phospho-alpha-D-ribose 1-diphosphate. Gln79 lines the GMP pocket. Position 103 (Asp103) interacts with Mg(2+). Guanine-binding residues include Asp106 and Ile149. Asp106 and Ile149 together coordinate xanthine. GMP contacts are provided by residues 106–110 (DSGKT) and 148–149 (WI).

The protein belongs to the purine/pyrimidine phosphoribosyltransferase family. XGPT subfamily. As to quaternary structure, homotetramer. Mg(2+) is required as a cofactor.

It localises to the cell inner membrane. The catalysed reaction is GMP + diphosphate = guanine + 5-phospho-alpha-D-ribose 1-diphosphate. It carries out the reaction XMP + diphosphate = xanthine + 5-phospho-alpha-D-ribose 1-diphosphate. The enzyme catalyses IMP + diphosphate = hypoxanthine + 5-phospho-alpha-D-ribose 1-diphosphate. The protein operates within purine metabolism; GMP biosynthesis via salvage pathway; GMP from guanine: step 1/1. It functions in the pathway purine metabolism; XMP biosynthesis via salvage pathway; XMP from xanthine: step 1/1. Functionally, purine salvage pathway enzyme that catalyzes the transfer of the ribosyl-5-phosphate group from 5-phospho-alpha-D-ribose 1-diphosphate (PRPP) to the N9 position of the 6-oxopurines guanine and xanthine to form the corresponding ribonucleotides GMP (guanosine 5'-monophosphate) and XMP (xanthosine 5'-monophosphate), with the release of PPi. To a lesser extent, also acts on hypoxanthine. This Cereibacter sphaeroides (strain ATCC 17025 / ATH 2.4.3) (Rhodobacter sphaeroides) protein is Xanthine-guanine phosphoribosyltransferase.